The sequence spans 417 residues: Calreticulin (417 aa).

Positions Met1–Ala17 are cleaved as a signal peptide. The N-domain stretch occupies residues Glu18–Glu197. A Ca(2+)-binding site is contributed by Gln26. Position 48 is an N6-acetyllysine (Lys48). Positions 62 and 64 each coordinate Ca(2+). Cys105 and Cys137 are oxidised to a cystine. 4 residues coordinate an alpha-D-glucoside: Tyr109, Lys111, Tyr128, and Asp135. Position 159 is an N6-acetyllysine (Lys159). Residues Val191 to Phe202 form a 1-1 repeat. The segment at Val191–Glu255 is 4 X approximate repeats. The disordered stretch occupies residues Ser193 to Arg278. The P-domain stretch occupies residues Asp198 to Tyr308. The segment covering Lys207–Glu251 has biased composition (basic and acidic residues). The residue at position 209 (Lys209) is an N6-acetyllysine. 6 consecutive repeat copies span residues Asp210–Glu221, Asp227–Lys238, Asp244–Glu255, Gly259–Pro269, Gly273–Pro283, and Gly287–Pro297. The interval Asp237–Glu270 is interaction with PPIB. A compositionally biased stretch (acidic residues) spans Asp252–Trp261. The interval Gly259–Pro297 is 3 X approximate repeats. The tract at residues Asp309 to Leu417 is C-domain. Asp317 provides a ligand contact to an alpha-D-glucoside. A Ca(2+)-binding site is contributed by Asp328. The interval Thr350–Leu417 is disordered. Residues Ala352–Glu379 are compositionally biased toward basic and acidic residues. Acidic residues predominate over residues Glu380–Val409. The Prevents secretion from ER signature appears at Lys414–Leu417.

It belongs to the calreticulin family. As to quaternary structure, monomer. Component of an EIF2 complex at least composed of CELF1/CUGBP1, CALR, CALR3, EIF2S1, EIF2S2, HSP90B1 and HSPA5. Interacts with PDIA3/ERp57 and SPACA9. Interacts with TRIM21. Interacts with NR3C1. Interacts with PPIB. Interacts (via P-domain) with PDIA5. Interacts with GABARAP. Interacts with CLCC1.

It is found in the endoplasmic reticulum lumen. It localises to the cytoplasm. The protein localises to the cytosol. Its subcellular location is the secreted. The protein resides in the extracellular space. It is found in the extracellular matrix. It localises to the cell surface. The protein localises to the sarcoplasmic reticulum lumen. Its subcellular location is the cytoplasmic vesicle. The protein resides in the secretory vesicle. It is found in the cortical granule. It localises to the cytoplasmic granule. In terms of biological role, calcium-binding chaperone that promotes folding, oligomeric assembly and quality control in the endoplasmic reticulum (ER) via the calreticulin/calnexin cycle. This lectin interacts transiently with almost all of the monoglucosylated glycoproteins that are synthesized in the ER. Interacts with the DNA-binding domain of NR3C1 and mediates its nuclear export. Involved in maternal gene expression regulation. May participate in oocyte maturation via the regulation of calcium homeostasis. The polypeptide is Calreticulin (CALR) (Chlorocebus aethiops (Green monkey)).